Consider the following 666-residue polypeptide: NADH-ubiquinone oxidoreductase chain 5 (666 aa).

17 helical membrane passes run 3-23 (LLILFLPLLGSLISGFGGRWL), 31-51 (FSTLCVVVSSLFSLLAFFEIG), 59-78 (IFLVSWIKSGAFYVSWGFLF), 82-101 (TVTMLVVITLVSSLVHIYSI), 119-139 (IFTFFMLILVTADNLIQMFLG), 168-190 (LIVNRVGDFGLSLGIFLIFWVFN), 211-231 (FLGFKLHVLTLISLFLFIGAI), 251-271 (TPVSALIHAATMVTAGVFLMI), 283-303 (ILFILITFGSLTAFFAAVTGV), 311-333 (VIAYSTCSQLGYMIFSCGMSCYD), 337-357 (FHLANHAFFKALLFLSAGSVI), 375-395 (FMPLTYSVMLIGTLALIGFPF), 421-441 (YISFACWLGTMSVFFTSFYSF), 467-487 (LLMIFPLIILSIGSIFAGYLI), 524-544 (WLPFILSLLGIFFASFVQIFL), 572-594 (VLYNRLIVLPILNFGYSISFKIL), and 629-649 (YLFFMIFTFCSFSIILVYSYI).

It belongs to the complex I subunit 5 family.

The protein resides in the mitochondrion inner membrane. The catalysed reaction is a ubiquinone + NADH + 5 H(+)(in) = a ubiquinol + NAD(+) + 4 H(+)(out). In terms of biological role, core subunit of the mitochondrial membrane respiratory chain NADH dehydrogenase (Complex I) that is believed to belong to the minimal assembly required for catalysis. Complex I functions in the transfer of electrons from NADH to the respiratory chain. The immediate electron acceptor for the enzyme is believed to be ubiquinone. In Chondrus crispus (Carrageen Irish moss), this protein is NADH-ubiquinone oxidoreductase chain 5 (ND5).